A 20-amino-acid polypeptide reads, in one-letter code: AGKLEGKVXLVTGAPSGIGK.

This is Unknown protein NF042 from 2D-PAGE from Naegleria fowleri (Brain eating amoeba).